A 391-amino-acid chain; its full sequence is Chalcone synthase (391 aa).

Residue cysteine 164 is part of the active site.

This sequence belongs to the thiolase-like superfamily. Chalcone/stilbene synthases family.

It carries out the reaction (E)-4-coumaroyl-CoA + 3 malonyl-CoA + 3 H(+) = 2',4,4',6'-tetrahydroxychalcone + 3 CO2 + 4 CoA. It participates in secondary metabolite biosynthesis; flavonoid biosynthesis. In terms of biological role, the primary product of this enzyme is 4,2',4',6'-tetrahydroxychalcone (also termed naringenin-chalcone or chalcone) which can under specific conditions spontaneously isomerize into naringenin. This chain is Chalcone synthase (CHS), found in Dianthus monspessulanus.